The sequence spans 432 residues: Hexane cyclase pydB (432 aa).

A signal peptide spans 1 to 20 (MMHQSLGLGLVVFVAAPVVA). Asn59, Asn78, Asn153, and Asn308 each carry an N-linked (GlcNAc...) asparagine glycan.

The protein belongs to the Diels-Alderase family.

Its pathway is mycotoxin biosynthesis. In terms of biological role, hexane cyclase; part of the gene cluster that mediates the biosynthesis of pyrrocidines, fungal natural products containing a macrocyclic para-cyclophane connected to a decahydrofluorene ring system that show potent antibiotic activities toward Gram-negative bacteria. Within the pathway, pydB functions synergistically with pydE, pydX and pydZ to form the cyclophane. The pathway begins with the PKS-NRPS pydA which, with the help of the trans-enoyl reductase pydC, synthesizes the polyketide-tyrosyl acyl thioester product which can be reductively off-loaded by the terminal reductase (R) domain in pydA. The alpha/beta hydrolase pydG is then required to catalyze the subsequent Knoevenagel condensation that affords the 3-pyrrolin-2-one ring, whereas the four proteins pydB, pydE, pydX and pydZ then function synergistically to form the cyclophane. PydB and the membrane-bound pydX and pydZ are lipid-binding proteins that can sequester and mold the pdyG product into the inverse S-shape. Binding of the medium chain reductase pydE to the complex would trigger the cascade oxidative cyclization. PydY is involved the Diels-Alder cycloaddition that forms the decahydrofluorene core. Additional non-enzymatic hydroxylation yields pyrrocidine A2 which can be further reduced into pyrrocidine B by an endogenous reductase. In Acremonium sp, this protein is Hexane cyclase pydB.